Reading from the N-terminus, the 809-residue chain is Phospholipase D alpha 1 (809 aa).

The region spanning 1–125 is the C2 domain; the sequence is MAQILLHGTL…LDGHEIDKWV (125 aa). D186 contacts Ca(2+). Residues 326–365 form the PLD phosphodiesterase 1 domain; the sequence is TMFTHHQKIVVVDSALPGGGGSDKRRIVSFVGGLDLCDGR. Active-site residues include H331, K333, and D338. H331 serves as a coordination point for a 1,2-diacyl-sn-glycero-3-phosphate. Residues H371 and H405 each contribute to the Ca(2+) site. A 1,2-diacyl-sn-glycero-3-phosphate is bound by residues Q521 and H660. In terms of domain architecture, PLD phosphodiesterase 2 spans 655–682; the sequence is FMIYVHTKMMIVDDEYIIIGSANINQRS. Residues H660, K662, and D667 contribute to the active site. Ca(2+) is bound at residue E721.

This sequence belongs to the phospholipase D family. C2-PLD subfamily. Ca(2+) is required as a cofactor.

It catalyses the reaction a 1,2-diacyl-sn-glycero-3-phosphocholine + H2O = a 1,2-diacyl-sn-glycero-3-phosphate + choline + H(+). Functionally, hydrolyzes glycerol-phospholipids at the terminal phosphodiesteric bond. Plays an important role in various cellular processes. This is Phospholipase D alpha 1 (PLD1) from Vigna unguiculata (Cowpea).